The chain runs to 212 residues: Glycerol-3-phosphate acyltransferase (212 aa).

5 consecutive transmembrane segments (helical) span residues 10–30, 90–110, 124–144, 150–170, and 171–191; these read FAAL…AVVV, GYGL…SLGF, FAVS…VAVV, LAAL…GGTI, and WPLN…LFYR.

The protein belongs to the PlsY family. In terms of assembly, probably interacts with PlsX.

It localises to the cell inner membrane. The catalysed reaction is an acyl phosphate + sn-glycerol 3-phosphate = a 1-acyl-sn-glycero-3-phosphate + phosphate. The protein operates within lipid metabolism; phospholipid metabolism. In terms of biological role, catalyzes the transfer of an acyl group from acyl-phosphate (acyl-PO(4)) to glycerol-3-phosphate (G3P) to form lysophosphatidic acid (LPA). This enzyme utilizes acyl-phosphate as fatty acyl donor, but not acyl-CoA or acyl-ACP. The chain is Glycerol-3-phosphate acyltransferase from Bordetella avium (strain 197N).